Consider the following 204-residue polypeptide: N-(5'-phosphoribosyl)anthranilate isomerase (204 aa).

Belongs to the TrpF family.

It catalyses the reaction N-(5-phospho-beta-D-ribosyl)anthranilate = 1-(2-carboxyphenylamino)-1-deoxy-D-ribulose 5-phosphate. It functions in the pathway amino-acid biosynthesis; L-tryptophan biosynthesis; L-tryptophan from chorismate: step 3/5. The sequence is that of N-(5'-phosphoribosyl)anthranilate isomerase from Bacillus cereus (strain B4264).